A 156-amino-acid chain; its full sequence is Arginine repressor (156 aa).

Belongs to the ArgR family.

It is found in the cytoplasm. It functions in the pathway amino-acid biosynthesis; L-arginine biosynthesis [regulation]. In terms of biological role, regulates arginine biosynthesis genes. The polypeptide is Arginine repressor (Vibrio campbellii (strain ATCC BAA-1116)).